The primary structure comprises 601 residues: NAD(+)--arginine ADP-ribosyltransferase Chelt (601 aa).

Residues 1–18 form the signal peptide; it reads MKTIISLIFIMFPLFVSA. NAD(+) is bound by residues 26 to 43 and glutamate 130; that span reads ADSRSPNEIKDLGGLYPR. Glutamate 130 is an active-site residue. Cysteine 205 and cysteine 220 are oxidised to a cystine.

The protein belongs to the enterotoxin A family.

Its subcellular location is the secreted. It carries out the reaction L-arginyl-[protein] + NAD(+) = N(omega)-(ADP-D-ribosyl)-L-arginyl-[protein] + nicotinamide + H(+). In terms of biological role, a probable mono(ADP-ribosyl)transferase, it may ADP-ribosylate Arg in target protein(s). Upon expression in yeast cells causes cell death. This chain is NAD(+)--arginine ADP-ribosyltransferase Chelt, found in Vibrio cholerae.